The following is a 195-amino-acid chain: Dephospho-CoA kinase (195 aa).

The 193-residue stretch at 3–195 (KIGLTGGIGS…ANMKNVIAEI (193 aa)) folds into the DPCK domain. An ATP-binding site is contributed by 11 to 16 (GSGKST).

This sequence belongs to the CoaE family.

The protein localises to the cytoplasm. It carries out the reaction 3'-dephospho-CoA + ATP = ADP + CoA + H(+). It participates in cofactor biosynthesis; coenzyme A biosynthesis; CoA from (R)-pantothenate: step 5/5. Its function is as follows. Catalyzes the phosphorylation of the 3'-hydroxyl group of dephosphocoenzyme A to form coenzyme A. In Corynebacterium glutamicum (Brevibacterium saccharolyticum), this protein is Dephospho-CoA kinase.